Here is a 346-residue protein sequence, read N- to C-terminus: D-alanine--D-alanine ligase (346 aa).

Residues 125-325 (KRIWRSEGLP…YPALCLEVLR (201 aa)) form the ATP-grasp domain. 151 to 206 (FAALGSPMIVKPDREGSTIGLTKVTQIEQCGAAYALAARHDAMVLCEQFVKGDEVT) serves as a coordination point for ATP. Residues Asp278, Glu292, and Asn294 each contribute to the Mg(2+) site.

Belongs to the D-alanine--D-alanine ligase family. The cofactor is Mg(2+). Mn(2+) serves as cofactor.

It localises to the cytoplasm. The enzyme catalyses 2 D-alanine + ATP = D-alanyl-D-alanine + ADP + phosphate + H(+). It participates in cell wall biogenesis; peptidoglycan biosynthesis. Cell wall formation. The protein is D-alanine--D-alanine ligase of Albidiferax ferrireducens (strain ATCC BAA-621 / DSM 15236 / T118) (Rhodoferax ferrireducens).